Consider the following 188-residue polypeptide: MFSCCFPTSRGCCFRNGGSESLFRRCRRRLIPHPRRLSPVVIRRIQVPQDSLGQALAGQATPEIPLGLQLHTVLVQEIQELIEAQTLAPGPCAEVRALPAPAAEPEPAWEEAPPERALELEGAPAKDQTNEELPEITEVPESIKRRLGRRVPAATPAPRGNLLLQAWMRVHSWASRLFAPNVLPGTGP.

As to expression, expressed in fetal heart, kidney, liver, lung and spleen.

The sequence is that of CMT1A duplicated region transcript 15 protein (CDRT15) from Homo sapiens (Human).